A 22-amino-acid chain; its full sequence is Putative lactoylglutathione lyase (22 aa).

Residues 1 to 22 form a disordered region; sequence ITACLDPDGWKEPGPLPGISTK. E12 serves as the catalytic Proton donor/acceptor.

This sequence belongs to the glyoxalase I family. Zn(2+) serves as cofactor.

The catalysed reaction is (R)-S-lactoylglutathione = methylglyoxal + glutathione. It participates in secondary metabolite metabolism; methylglyoxal degradation; (R)-lactate from methylglyoxal: step 1/2. In terms of biological role, catalyzes the conversion of hemimercaptal, formed from methylglyoxal and glutathione, to S-lactoylglutathione. This chain is Putative lactoylglutathione lyase, found in Pinus strobus (Eastern white pine).